The primary structure comprises 348 residues: Uroporphyrinogen decarboxylase (348 aa).

Residues 27–31 (RQAGR), Phe-46, Asp-76, Tyr-152, Ser-207, and His-320 each bind substrate.

It belongs to the uroporphyrinogen decarboxylase family. Homodimer.

The protein localises to the cytoplasm. The enzyme catalyses uroporphyrinogen III + 4 H(+) = coproporphyrinogen III + 4 CO2. It functions in the pathway porphyrin-containing compound metabolism; protoporphyrin-IX biosynthesis; coproporphyrinogen-III from 5-aminolevulinate: step 4/4. Functionally, catalyzes the decarboxylation of four acetate groups of uroporphyrinogen-III to yield coproporphyrinogen-III. The protein is Uroporphyrinogen decarboxylase of Bacillus cereus (strain G9842).